A 458-amino-acid chain; its full sequence is UPF0210 protein Maeo_1412 (458 aa).

It belongs to the UPF0210 family.

The sequence is that of UPF0210 protein Maeo_1412 from Methanococcus aeolicus (strain ATCC BAA-1280 / DSM 17508 / OCM 812 / Nankai-3).